The chain runs to 209 residues: Thymidylate kinase (209 aa).

7 to 14 serves as a coordination point for ATP; that stretch reads GIDGAGKS.

The protein belongs to the thymidylate kinase family.

The catalysed reaction is dTMP + ATP = dTDP + ADP. Its function is as follows. Phosphorylation of dTMP to form dTDP in both de novo and salvage pathways of dTTP synthesis. The sequence is that of Thymidylate kinase from Mycoplasma mobile (strain ATCC 43663 / 163K / NCTC 11711) (Mesomycoplasma mobile).